The following is a 115-amino-acid chain: Large ribosomal subunit protein uL18 (115 aa).

The segment at 1-29 is disordered; sequence MISKPDKNKLRQKRHTRVRGKISGTSETP. Residues 10-20 are compositionally biased toward basic residues; it reads LRQKRHTRVRG.

It belongs to the universal ribosomal protein uL18 family. In terms of assembly, part of the 50S ribosomal subunit; part of the 5S rRNA/L5/L18/L25 subcomplex. Contacts the 5S and 23S rRNAs.

In terms of biological role, this is one of the proteins that bind and probably mediate the attachment of the 5S RNA into the large ribosomal subunit, where it forms part of the central protuberance. The protein is Large ribosomal subunit protein uL18 of Lactococcus lactis subsp. lactis (strain IL1403) (Streptococcus lactis).